Consider the following 601-residue polypeptide: 66 kDa stress protein (601 aa).

10 WD repeats span residues 56–95 (EHAQ…HPLK), 100–143 (VLSG…GEIT), 145–184 (HSKA…FKHA), 187–226 (EHTR…KVGA), 233–272 (AHAL…LTTF), 318–357 (GHNK…AVPI), 435–478 (ASTT…LSEQ), 483–522 (GHRG…IKVE), 526–565 (YHNA…KHIA), and 569–600 (AHRG…WTIK).

The protein belongs to the WD repeat AIP1 family.

Associated with the process of cyst formation. This Physarum polycephalum (Slime mold) protein is 66 kDa stress protein.